Reading from the N-terminus, the 257-residue chain is MIHSKRLRLWLYLVLLAVFIGACGMKKEESSKDKQIKENFNKTLSLYPTKNLEDFYDKEGFRDQEFEKGDKGTWIIHSKMTIETNGKNMESRGLVLYVDRNTRTTKGEFIVRELWEDKKGYSRSKEKEYPVKMEHNKIIPTKPIADDKLRKEIENFKFFVQYGDFKDINDYKDGDISYNPNVPSYSAKYQLSNDDYNVKQLRKRYDIPTKKAPKLLIKGDGDLKGSSIGHKNLEFTFIENKEENIYFTDSINFKPTE.

The N-terminal stretch at 1–22 (MIHSKRLRLWLYLVLLAVFIGA) is a signal peptide. The N-palmitoyl cysteine moiety is linked to residue Cys-23. Residue Cys-23 is the site of S-diacylglycerol cysteine attachment.

This sequence belongs to the staphylococcal tandem lipoprotein family.

The protein resides in the cell membrane. This is an uncharacterized protein from Staphylococcus aureus (strain NCTC 8325 / PS 47).